The following is a 118-amino-acid chain: UPF0342 protein BC_0880 (118 aa).

This sequence belongs to the UPF0342 family.

This is UPF0342 protein BC_0880 from Bacillus cereus (strain ATCC 14579 / DSM 31 / CCUG 7414 / JCM 2152 / NBRC 15305 / NCIMB 9373 / NCTC 2599 / NRRL B-3711).